The chain runs to 174 residues: Mitochondrial holo-[acyl-carrier-protein] synthase (174 aa).

This sequence belongs to the P-Pant transferase superfamily. AcpS family.

Its subcellular location is the mitochondrion. The enzyme catalyses apo-[ACP] + CoA = holo-[ACP] + adenosine 3',5'-bisphosphate + H(+). Functionally, transfers the 4'-phosphopantetheine moiety from coenzyme A to a Ser of mitochondrial acyl-carrier-protein. The polypeptide is Mitochondrial holo-[acyl-carrier-protein] synthase (PPT2) (Eremothecium gossypii (strain ATCC 10895 / CBS 109.51 / FGSC 9923 / NRRL Y-1056) (Yeast)).